We begin with the raw amino-acid sequence, 374 residues long: Nucleosome assembly protein 1;3 (374 aa).

Residues 26-80 (VNALKNKLQNLAGQHSDVLENLTPKIRRRVEVLREIQGKHDEIETKFREERAALE) adopt a coiled-coil conformation. Ser41 bears the Phosphoserine mark. Residues 47-62 (LTPKIRRRVEVLREIQ) carry the Nuclear export signal motif. Residues 222–227 (KKKPKK) carry the Nuclear localization signal motif. The segment covering 299-339 (IEGEEFEIDNDDEDDIDEDEDEDEEDEDEDEEEDDEDEEEE) has biased composition (acidic residues). The disordered stretch occupies residues 299–374 (IEGEEFEIDN…GERPPECKQQ (76 aa)). The segment covering 343–355 (TKKKPSVLHKKGG) has biased composition (basic residues). The span at 364-374 (QGERPPECKQQ) shows a compositional bias: basic and acidic residues. The residue at position 371 (Cys371) is a Cysteine methyl ester. The S-farnesyl cysteine moiety is linked to residue Cys371. A propeptide spans 372–374 (KQQ) (removed in mature form).

It belongs to the nucleosome assembly protein (NAP) family. As to quaternary structure, can form homomeric and heteromeric protein complexes with NAP1;1, NAP1;2 and NAP1;4. Binds histone H2A and associates with chromatin in vivo. Ubiquitous.

The protein resides in the nucleus. The protein localises to the cytoplasm. Its function is as follows. May modulate chromatin structure by regulation of nucleosome assembly/disassembly. May function in nucleotide excision repair (NER). Involved in somatic homologous recombination. Could be involved in response to abscisic acid (ABA) and to salt stress. This Arabidopsis thaliana (Mouse-ear cress) protein is Nucleosome assembly protein 1;3 (NAP1;3).